Here is a 160-residue protein sequence, read N- to C-terminus: Triabin (160 aa).

Positions 1 to 18 (MKTIIAVTIFGILTCAYA) are cleaved as a signal peptide. 3 disulfide bridges follow: C24/C128, C57/C160, and C87/C102.

The protein belongs to the calycin superfamily. Triabin family. Expressed in salivary glands.

It localises to the secreted. Its function is as follows. Thrombin inhibitor. Forms a non-covalent complex with thrombin at a molar ratio of 1:1. Inhibits thrombin-induced platelet aggregation. Prolongs thrombin clotting time and activated partial thromboplastin time. It only minimally suppresses the amidolytic activity of thrombin. Inhibits thrombin-mediated fibrin formation in the host. Inhibits thrombin-induced endothelium-dependent relaxant and contractile responses in host blood vessels. Inhibits thrombin-induced mitogenesis in host vascular smooth muscle cells. The sequence is that of Triabin from Meccus pallidipennis (Triatomine bug).